The primary structure comprises 180 residues: Negative modulator of initiation of replication (180 aa).

3 interaction with DNA regions span residues 86-87 (AV), 115-119 (RTRVY), and 149-155 (NTNTGRK).

This sequence belongs to the SeqA family. Homodimer. Polymerizes to form helical filaments.

It is found in the cytoplasm. Negative regulator of replication initiation, which contributes to regulation of DNA replication and ensures that replication initiation occurs exactly once per chromosome per cell cycle. Binds to pairs of hemimethylated GATC sequences in the oriC region, thus preventing assembly of replication proteins and re-initiation at newly replicated origins. Repression is relieved when the region becomes fully methylated. The polypeptide is Negative modulator of initiation of replication (Salmonella typhimurium (strain LT2 / SGSC1412 / ATCC 700720)).